The sequence spans 222 residues: dTTP/UTP pyrophosphatase (222 aa).

D83 acts as the Proton acceptor in catalysis.

The protein belongs to the Maf family. YhdE subfamily. Requires a divalent metal cation as cofactor.

It is found in the cytoplasm. It catalyses the reaction dTTP + H2O = dTMP + diphosphate + H(+). It carries out the reaction UTP + H2O = UMP + diphosphate + H(+). Nucleoside triphosphate pyrophosphatase that hydrolyzes dTTP and UTP. May have a dual role in cell division arrest and in preventing the incorporation of modified nucleotides into cellular nucleic acids. The sequence is that of dTTP/UTP pyrophosphatase from Desulfitobacterium hafniense (strain Y51).